Reading from the N-terminus, the 350-residue chain is MAEKVNVCIVGSGNWGSAIAKIVGANASALPEFEERVTMFVYEEMIDGKKLTEIINETHENVKYLKGHKLPTNVVAVPDLVEAAKNADILIFVVPHQFIPNFCKQLLGKIKPNAIAISLIKGFDKAEGGGIDLISHIITRHLKIPCAVLMGANLANEVAEGNFCETTIGCTDKKYGKVLRDLFQANHFRVVVVEDADAVEVCGALKNIVACGAGFVDGLKLGDNTKAAVIRLGLMEMIRFVDVFYPGSKLSTFFESCGVADLITTCYGGRNRRVSEAFVTSGKTIEELEKEMLNGQKLQGPPTAEEVNYMLKNKGLEDKFPLFTAIHKICTNQLKPKDLIDCIRNHPEHM.

NAD(+) contacts are provided by residues 11 to 16, phenylalanine 98, lysine 121, and alanine 155; that span reads GSGNWG. Lysine 121 contributes to the substrate binding site. Catalysis depends on lysine 206, which acts as the Proton acceptor. NAD(+)-binding residues include arginine 270 and glutamine 299. Residue 270–271 participates in substrate binding; the sequence is RN.

The protein belongs to the NAD-dependent glycerol-3-phosphate dehydrogenase family. Homodimer.

It is found in the cytoplasm. The catalysed reaction is sn-glycerol 3-phosphate + NAD(+) = dihydroxyacetone phosphate + NADH + H(+). Its pathway is phospholipid metabolism; alpha-glycerophosphate cycle. This is Glycerol-3-phosphate dehydrogenase [NAD(+)], cytoplasmic (Gpdh1) from Drosophila ezoana (Fruit fly).